The primary structure comprises 413 residues: Alpha-1-antitrypsin 1-4 (413 aa).

Residues 1–24 form the signal peptide; it reads MTPSISWSLLLLAGLCCLVPSFLA. N-linked (GlcNAc...) asparagine glycans are attached at residues N64, N101, and N265. An RCL region spans residues 368–387; it reads AATVLQVATYSMPPIVRFDH.

The protein belongs to the serpin family.

Its subcellular location is the secreted. In terms of biological role, inhibitor of serine proteases. Can inhibit trypsin and chymotrypsin; relatively ineffective against elastase. The polypeptide is Alpha-1-antitrypsin 1-4 (Serpina1d) (Mus musculus (Mouse)).